The chain runs to 211 residues: MARLNVNPTRMELSRLKKQLTTATRGHKLLKDKQDELMRRFIALVKENNELRIQVEQEVTDALSNFVLANATLNEAFIEELVAIPAEKVELEIIEQNILSVPVPKMIFDYDESVQEAPLDYGYVNSNSELDQAFAKISSILPKLLALANVEKTCQLLSKEIEKTRRRVNALEYMTIPQLEETIYYIQMKLEENERGEITRLIKIKSMNKEN.

The protein belongs to the V-ATPase D subunit family.

In terms of biological role, produces ATP from ADP in the presence of a proton gradient across the membrane. The chain is V-type ATP synthase subunit D from Enterococcus faecalis (strain ATCC 700802 / V583).